The primary structure comprises 347 residues: Protein RecA (347 aa).

67–74 contacts ATP; it reads GPESSGKT.

Belongs to the RecA family.

The protein resides in the cytoplasm. Can catalyze the hydrolysis of ATP in the presence of single-stranded DNA, the ATP-dependent uptake of single-stranded DNA by duplex DNA, and the ATP-dependent hybridization of homologous single-stranded DNAs. It interacts with LexA causing its activation and leading to its autocatalytic cleavage. In Helicobacter pylori (strain P12), this protein is Protein RecA.